The following is a 264-amino-acid chain: Glutamate racemase (264 aa).

Substrate is bound by residues 9–10 (DS) and 41–42 (YG). Cysteine 72 serves as the catalytic Proton donor/acceptor. 73–74 (NT) contacts substrate. The active-site Proton donor/acceptor is cysteine 183. 184–185 (TH) is a binding site for substrate.

Belongs to the aspartate/glutamate racemases family.

The catalysed reaction is L-glutamate = D-glutamate. It participates in cell wall biogenesis; peptidoglycan biosynthesis. Its function is as follows. Provides the (R)-glutamate required for cell wall biosynthesis. In Geobacillus kaustophilus (strain HTA426), this protein is Glutamate racemase.